The following is a 522-amino-acid chain: tRNA-2-methylthio-N(6)-dimethylallyladenosine synthase (522 aa).

Positions Met1 to Pro26 are enriched in low complexity. A disordered region spans residues Met1–Gln27. An MTTase N-terminal domain is found at Arg28–His143. Cys37, Cys72, Cys106, Cys180, Cys184, and Cys187 together coordinate [4Fe-4S] cluster. The region spanning Arg166 to Glu396 is the Radical SAM core domain. Residues Ala399–Ser469 enclose the TRAM domain. Residues Gly481 to Ser522 are disordered. Gly residues predominate over residues Val496 to Ser511.

This sequence belongs to the methylthiotransferase family. MiaB subfamily. Monomer. Requires [4Fe-4S] cluster as cofactor.

The protein resides in the cytoplasm. It catalyses the reaction N(6)-dimethylallyladenosine(37) in tRNA + (sulfur carrier)-SH + AH2 + 2 S-adenosyl-L-methionine = 2-methylsulfanyl-N(6)-dimethylallyladenosine(37) in tRNA + (sulfur carrier)-H + 5'-deoxyadenosine + L-methionine + A + S-adenosyl-L-homocysteine + 2 H(+). Catalyzes the methylthiolation of N6-(dimethylallyl)adenosine (i(6)A), leading to the formation of 2-methylthio-N6-(dimethylallyl)adenosine (ms(2)i(6)A) at position 37 in tRNAs that read codons beginning with uridine. The sequence is that of tRNA-2-methylthio-N(6)-dimethylallyladenosine synthase from Arthrobacter sp. (strain FB24).